Reading from the N-terminus, the 474-residue chain is Glutathione synthetase (474 aa).

At alanine 2 the chain carries N-acetylalanine. Position 125 (arginine 125) interacts with substrate. An ATP-binding site is contributed by glutamate 144. The Mg(2+) site is built by glutamate 144 and asparagine 146. Substrate is bound by residues 148 to 151 (VSAS), 214 to 216 (ERN), glutamine 220, and 267 to 270 (RDGY). Residues lysine 305, 364–373 (KPQREGGGNN), tyrosine 375, and 398–401 (MEKI) contribute to the ATP site. Residue glutamate 368 participates in Mg(2+) binding. Serine 415 is subject to Phosphoserine. Glutamate 425 provides a ligand contact to ATP. Arginine 450 contacts substrate. 2 residues coordinate ATP: lysine 452 and aspartate 458. Substrate is bound at residue 461–462 (VA).

Belongs to the eukaryotic GSH synthase family. As to quaternary structure, homodimer. The cofactor is Mg(2+).

The catalysed reaction is gamma-L-glutamyl-L-cysteine + glycine + ATP = glutathione + ADP + phosphate + H(+). It catalyses the reaction gamma-L-glutamyl-(2S)-2-aminobutanoate + glycine + ATP = ophthalmate + ADP + phosphate + H(+). Its pathway is sulfur metabolism; glutathione biosynthesis; glutathione from L-cysteine and L-glutamate: step 2/2. In terms of biological role, catalyzes the production of glutathione from gamma-glutamylcysteine and glycine in an ATP-dependent manner. Glutathione (gamma-glutamylcysteinylglycine, GSH) is the most abundant intracellular thiol in living aerobic cells and is required for numerous processes including the protection of cells against oxidative damage, amino acid transport, the detoxification of foreign compounds, the maintenance of protein sulfhydryl groups in a reduced state and acts as a cofactor for a number of enzymes. Participates in ophthalmate biosynthesis in hepatocytes. The sequence is that of Glutathione synthetase from Bos taurus (Bovine).